The primary structure comprises 257 residues: Thioredoxin-dependent peroxide reductase, mitochondrial (257 aa).

The transit peptide at 1–62 (MAAAAGRLLW…FAFSTSSSFH (62 aa)) directs the protein to the mitochondrion. The 159-residue stretch at 64 to 222 (PAVTQHAPHF…PLRLVKAFQF (159 aa)) folds into the Thioredoxin domain. Lys-84 carries the N6-succinyllysine modification. Lys-92 is modified (N6-acetyllysine; alternate). Lys-92 carries the post-translational modification N6-succinyllysine; alternate. The active-site Cysteine sulfenic acid (-SOH) intermediate is the Cys-109. Thr-147 bears the Phosphothreonine mark.

Belongs to the peroxiredoxin family. AhpC/Prx1 subfamily. In terms of assembly, homodimer; disulfide-linked, upon oxidation. 6 homodimers assemble to form a ring-like dodecamer. Interacts with NEK6. Interacts with LRRK2. Interacts with MAP3K13. Interacts with RPS6KC1 (via PX domain). In terms of processing, phosphorylated by LRRK2; phosphorylation reduces perodixase activity. Post-translationally, the enzyme can be inactivated by further oxidation of the cysteine sulfenic acid (C(P)-SOH) to sulphinic acid (C(P)-SO2H) and sulphonic acid (C(P)-SO3H) instead of its condensation to a disulfide bond. S-palmitoylated. Ubiquitous.

It is found in the mitochondrion. It localises to the cytoplasm. Its subcellular location is the early endosome. The catalysed reaction is a hydroperoxide + [thioredoxin]-dithiol = an alcohol + [thioredoxin]-disulfide + H2O. Functionally, thiol-specific peroxidase that catalyzes the reduction of hydrogen peroxide and organic hydroperoxides to water and alcohols, respectively. Plays a role in cell protection against oxidative stress by detoxifying peroxides. Acts synergistically with MAP3K13 to regulate the activation of NF-kappa-B in the cytosol. Required for the maintenance of physical strength. This Rattus norvegicus (Rat) protein is Thioredoxin-dependent peroxide reductase, mitochondrial (Prdx3).